Reading from the N-terminus, the 509-residue chain is tRNA-2-methylthio-N(6)-dimethylallyladenosine synthase (509 aa).

A disordered region spans residues 1 to 21 (MNEKQKLESGQVHPSDKKSEK). One can recognise an MTTase N-terminal domain in the interval 66-184 (RKFYIRTYGC…LPELLSEAYL (119 aa)). [4Fe-4S] cluster-binding residues include cysteine 75, cysteine 111, cysteine 145, cysteine 221, cysteine 225, and cysteine 228. Residues 207–437 (RNGKIKGWVN…NALVNEISAK (231 aa)) form the Radical SAM core domain. A TRAM domain is found at 440 to 503 (KEYEGKVVEV…TWSLDGEMVG (64 aa)).

The protein belongs to the methylthiotransferase family. MiaB subfamily. Monomer. Requires [4Fe-4S] cluster as cofactor.

The protein resides in the cytoplasm. The catalysed reaction is N(6)-dimethylallyladenosine(37) in tRNA + (sulfur carrier)-SH + AH2 + 2 S-adenosyl-L-methionine = 2-methylsulfanyl-N(6)-dimethylallyladenosine(37) in tRNA + (sulfur carrier)-H + 5'-deoxyadenosine + L-methionine + A + S-adenosyl-L-homocysteine + 2 H(+). It carries out the reaction N(6)-dimethylallyladenosine(37) in tRNA + (sulfur carrier)-SH + AH2 + S-adenosyl-L-methionine = 2-thio-N(6)-dimethylallyladenosine(37) in tRNA + (sulfur carrier)-H + 5'-deoxyadenosine + L-methionine + A + H(+). It catalyses the reaction 2-thio-N(6)-dimethylallyladenosine(37) in tRNA + S-adenosyl-L-methionine = 2-methylsulfanyl-N(6)-dimethylallyladenosine(37) in tRNA + S-adenosyl-L-homocysteine + H(+). Catalyzes the methylthiolation of N6-(dimethylallyl)adenosine (i(6)A), leading to the formation of 2-methylthio-N6-(dimethylallyl)adenosine (ms(2)i(6)A) at position 37 in tRNAs that read codons beginning with uridine. The sequence is that of tRNA-2-methylthio-N(6)-dimethylallyladenosine synthase from Bacillus subtilis (strain 168).